We begin with the raw amino-acid sequence, 25 residues long: ATVKVTLIKSVTGRIPNHKLXVKGL.

Belongs to the universal ribosomal protein uL30 family. As to quaternary structure, part of the 50S ribosomal subunit.

The sequence is that of Large ribosomal subunit protein uL30 (rpmD) from Pseudomonas fluorescens biotype A.